The chain runs to 379 residues: Tetraacyldisaccharide 4'-kinase (379 aa).

63–70 (AVGGAGKT) serves as a coordination point for ATP.

Belongs to the LpxK family.

The enzyme catalyses a lipid A disaccharide + ATP = a lipid IVA + ADP + H(+). The protein operates within glycolipid biosynthesis; lipid IV(A) biosynthesis; lipid IV(A) from (3R)-3-hydroxytetradecanoyl-[acyl-carrier-protein] and UDP-N-acetyl-alpha-D-glucosamine: step 6/6. Its function is as follows. Transfers the gamma-phosphate of ATP to the 4'-position of a tetraacyldisaccharide 1-phosphate intermediate (termed DS-1-P) to form tetraacyldisaccharide 1,4'-bis-phosphate (lipid IVA). In Anaeromyxobacter dehalogenans (strain 2CP-1 / ATCC BAA-258), this protein is Tetraacyldisaccharide 4'-kinase.